Here is a 358-residue protein sequence, read N- to C-terminus: Magnesium-protoporphyrin IX monomethyl ester [oxidative] cyclase (358 aa).

The protein belongs to the AcsF family. It depends on Fe cation as a cofactor.

The catalysed reaction is Mg-protoporphyrin IX 13-monomethyl ester + 3 NADPH + 3 O2 + 2 H(+) = 3,8-divinyl protochlorophyllide a + 3 NADP(+) + 5 H2O. Its pathway is porphyrin-containing compound metabolism; chlorophyll biosynthesis (light-independent). Functionally, catalyzes the formation of the isocyclic ring in chlorophyll biosynthesis. Mediates the cyclase reaction, which results in the formation of divinylprotochlorophyllide (Pchlide) characteristic of all chlorophylls from magnesium-protoporphyrin IX 13-monomethyl ester (MgPMME). This chain is Magnesium-protoporphyrin IX monomethyl ester [oxidative] cyclase, found in Synechococcus elongatus (strain ATCC 33912 / PCC 7942 / FACHB-805) (Anacystis nidulans R2).